The primary structure comprises 192 residues: MTVRLSSEHPRGRSAARRLRTRAAAYLAALGRADAEISILLVGDRRIRALNREWRGKDAATDVLSFPLSEPPGSGPLLGDVVISLDTAARRARQERRAVGAELDRYLAHGLLHLLGYDHERPADARRMARKEAELARAEGLVGAALREGGPARAAETETSWTRSPTSTSTRSPSGSTARGTRARSSRAGSGR.

Zn(2+) contacts are provided by histidine 109, histidine 113, and histidine 119. Positions 142–192 (VGAALREGGPARAAETETSWTRSPTSTSTRSPSGSTARGTRARSSRAGSGR) are disordered. Positions 159–180 (TSWTRSPTSTSTRSPSGSTARG) are enriched in low complexity.

This sequence belongs to the endoribonuclease YbeY family. Zn(2+) serves as cofactor.

It localises to the cytoplasm. Functionally, single strand-specific metallo-endoribonuclease involved in late-stage 70S ribosome quality control and in maturation of the 3' terminus of the 16S rRNA. This chain is Endoribonuclease YbeY, found in Anaeromyxobacter sp. (strain Fw109-5).